The sequence spans 73 residues: Sec-independent protein translocase protein TatA (73 aa).

The chain crosses the membrane as a helical span at residues 1 to 21; that stretch reads MGSFSIWHWLIVLVIVMLVFG. Residues 44 to 73 form a disordered region; it reads KSAEDPNEQIPQSTTTAEKTVDVQAKDINK. Residues 52–61 show a composition bias toward polar residues; the sequence is QIPQSTTTAE. A compositionally biased stretch (basic and acidic residues) spans 62-73; that stretch reads KTVDVQAKDINK.

Belongs to the TatA/E family. In terms of assembly, the Tat system comprises two distinct complexes: a TatABC complex, containing multiple copies of TatA, TatB and TatC subunits, and a separate TatA complex, containing only TatA subunits. Substrates initially bind to the TatABC complex, which probably triggers association of the separate TatA complex to form the active translocon.

Its subcellular location is the cell inner membrane. Its function is as follows. Part of the twin-arginine translocation (Tat) system that transports large folded proteins containing a characteristic twin-arginine motif in their signal peptide across membranes. TatA could form the protein-conducting channel of the Tat system. The polypeptide is Sec-independent protein translocase protein TatA (Polynucleobacter asymbioticus (strain DSM 18221 / CIP 109841 / QLW-P1DMWA-1) (Polynucleobacter necessarius subsp. asymbioticus)).